The sequence spans 350 residues: Trans-enoyl reductase iliB (350 aa).

An NADP(+)-binding site is contributed by 50-53 (VDGK). 145 to 152 (AAIATVGL) contacts substrate. Residues 177-180 (SAAS), tyrosine 195, and 242-243 (LD) each bind NADP(+). Residue 262-266 (TPTQF) participates in substrate binding. 331–332 (IK) is an NADP(+) binding site.

It belongs to the zinc-containing alcohol dehydrogenase family. In terms of assembly, monomer.

It carries out the reaction N-[(4E,6E,10S,12Z,14E)-6,10-dimethyl-3-oxohexadeca-4,6,12,14-tetraenoyl]-L-tyrosyl-[ACP] = (3E,5S)-3-[(2E,4E,8S,10E,12Z)-1-hydroxy-4,8-dimethyltetradeca-2,4,10,12-tetraen-1-ylidene]-5-[(4-hydroxyphenyl)methyl]pyrrolidine-2,4-dione + holo-[ACP] + H(+). Its pathway is mycotoxin biosynthesis. Its function is as follows. Trans-enoyl reductase; part of the gene cluster that mediates the biosynthesis of ilicicolin H, a 4-hydroxy-2-pyridonealkaloid that has potent and broad antifungal activities by inhibiting the mitochondrial respiration chain. IliB collaborates with the hybrid PKS-NRPS synthetase iliA to assemble the backbone of ilicicolin H. The PKS portion of iliA and trans-acting enoyl reductase iliB work together to construct an octaketide, and two methyl groups are introduced by the MT domain of iliA during the chain assembly. The nascent chain is then condensed with tyrosine, catalyzed by the iliA C domain, and the resulting PKS-NRPS hybrid is offloaded by the iliA RED domain to form an advanced tetramic acid intermediate. The biosynthesis of ilicicolin H starts with formation of the tetramic acid by the hybrid PKS-NRPS synthetase iliA with the partnering trans-enoyl reductase iliB since iliA lacks a designated enoylreductase (ER) domain. The cytochrome P450 monooxygenase iliC then catalyzes the ring expansion of the tetramate to the acyclic 2-pyridone. The pericyclase iliD further converts the acyclic 2-pyridone into 8-epi-ilicicolin H. 8-epi-ilicicolin H might then spontaneously convert to ilicicolin H since ilicicolin H is produced in the absence of the epimerase iliE, in contrast to what was observed for the Talaromyces variabilis ilicolin H biosynthetic pathway. This Hypocrea jecorina (strain QM6a) (Trichoderma reesei) protein is Trans-enoyl reductase iliB.